The sequence spans 1106 residues: Probable ATP-citrate synthase (1106 aa).

Citrate-binding residues include N358, T360, and R391. Over residues 442–459 (APQTTGQFLLSPERNTGG) the composition is skewed to polar residues. Residues 442–478 (APQTTGQFLLSPERNTGGTERAPPSPAANATPTEHPL) form a disordered region. ATP contacts are provided by residues 701–721 (VIRYQNDDRVKMIVLLGEVGG) and 752–778 (ITSEVQFGHAGASANALGETAACKNAA). E718 serves as a coordination point for Mg(2+). H760 (tele-phosphohistidine intermediate) is an active-site residue. Residue 779 to 789 (LRASGALVPES) coordinates CoA.

This sequence in the N-terminal section; belongs to the succinate/malate CoA ligase beta subunit family. It in the C-terminal section; belongs to the succinate/malate CoA ligase alpha subunit family. As to quaternary structure, homotetramer.

Its subcellular location is the cytoplasm. The catalysed reaction is oxaloacetate + acetyl-CoA + ADP + phosphate = citrate + ATP + CoA. In terms of biological role, catalyzes the cleavage of citrate into oxaloacetate and acetyl-CoA, the latter serving as common substrate in multiple biochemical reactions in protein, carbohydrate and lipid metabolism. This chain is Probable ATP-citrate synthase, found in Caenorhabditis elegans.